A 342-amino-acid chain; its full sequence is MSNSNGDNKYGVITIGDEKKFQATIAPLGATLVDLKVNGQSVVQGYSNVQDYLTDGNMMGATVGRYANRIAKGVFSLDDGPHKLTVNNCGNTNHSSISSLNLKQYKASPVENPSKGVYVVEFKLLDDHTQPNPNEFPGDLEVTVKYTLNVAEMTLDMEYQAQLVRGDATPINMTNHSYFNLNKVKSEKSIRGTEVKVCSNKSLEVTEGALLPTGKIIERNIATFDSTKPTVLHEDTPVFDCTFIIDANKDLKTTDSVSVNKLVPVFKAYHPESHIKFEVSTTEPTVHLYTGDNLCGKFVPRSGFAVQQGRYVDAINRDEWRGCVLLKRGEVYTSKTQYKFDI.

R69 lines the substrate pocket. The active-site Proton donor is the H176. Position 240 (D240) interacts with substrate.

The protein belongs to the aldose epimerase family.

This is an uncharacterized protein from Saccharomyces cerevisiae (strain ATCC 204508 / S288c) (Baker's yeast).